The chain runs to 327 residues: Methionyl-tRNA formyltransferase (327 aa).

121 to 124 (SLLP) provides a ligand contact to (6S)-5,6,7,8-tetrahydrofolate.

Belongs to the Fmt family.

The enzyme catalyses L-methionyl-tRNA(fMet) + (6R)-10-formyltetrahydrofolate = N-formyl-L-methionyl-tRNA(fMet) + (6S)-5,6,7,8-tetrahydrofolate + H(+). Its function is as follows. Attaches a formyl group to the free amino group of methionyl-tRNA(fMet). The formyl group appears to play a dual role in the initiator identity of N-formylmethionyl-tRNA by promoting its recognition by IF2 and preventing the misappropriation of this tRNA by the elongation apparatus. In Burkholderia ambifaria (strain ATCC BAA-244 / DSM 16087 / CCUG 44356 / LMG 19182 / AMMD) (Burkholderia cepacia (strain AMMD)), this protein is Methionyl-tRNA formyltransferase.